The following is a 219-amino-acid chain: MSCPRSIEIPDGSWIDWFLGIKGHEFSCRVPNEYIQDKFNLTGLEFDSQTLEVVLDPEFDNEDWDCAEEKKLYGMIHARYIVSPRGIEDMRLKYERGDFGSCPRVFCKRQKVLPVGLHDVWDKAQVKIYCPSCNNVYIPLPHNGMLDGAMFGTSFPHMFFMQLPSLIPSPPVEKYIPRIYGFQLHKKALMPPESAESPPIKVESSVSKSPSWLRNVPNF.

Positions 194-219 (SAESPPIKVESSVSKSPSWLRNVPNF) are disordered. Positions 204-219 (SSVSKSPSWLRNVPNF) are enriched in polar residues.

The protein belongs to the casein kinase 2 subunit beta family.

This chain is Suppressor-of-stellate-like protein (Ssl), found in Drosophila melanogaster (Fruit fly).